A 369-amino-acid chain; its full sequence is Protein RecA (369 aa).

ATP is bound at residue 77-84; the sequence is GPESSGKT.

The protein belongs to the RecA family.

The protein localises to the cytoplasm. Its function is as follows. Can catalyze the hydrolysis of ATP in the presence of single-stranded DNA, the ATP-dependent uptake of single-stranded DNA by duplex DNA, and the ATP-dependent hybridization of homologous single-stranded DNAs. It interacts with LexA causing its activation and leading to its autocatalytic cleavage. This is Protein RecA from Corynebacterium pseudotuberculosis (strain C231).